The primary structure comprises 285 residues: Hypersensitive-induced reaction 1 protein (285 aa).

G2 is lipidated: N-myristoyl glycine. Residues 118–190 (FEQKNEIAKS…EKILQIKRAE (73 aa)) are a coiled coil.

As to quaternary structure, homo- and heterodimer. Interacts with LRR1 (via LRR domain). Constitutively expressed in stems, roots and flowers, but not in leaves and fruits.

Functionally, positive regulator of hypersensitive response (HR)-like cell death. May be involved in potassium ion channel regulation. The polypeptide is Hypersensitive-induced reaction 1 protein (Capsicum annuum (Capsicum pepper)).